A 165-amino-acid polypeptide reads, in one-letter code: Small ribosomal subunit protein uS13 (165 aa).

The tract at residues 139 to 165 is disordered; sequence GMTIGVARKKAAQPQSQQSSSQQQKSS. A compositionally biased stretch (low complexity) spans 153 to 165; it reads QSQQSSSQQQKSS.

Belongs to the universal ribosomal protein uS13 family. Part of the 30S ribosomal subunit. Forms a loose heterodimer with protein S19. Forms two bridges to the 50S subunit in the 70S ribosome.

Functionally, located at the top of the head of the 30S subunit, it contacts several helices of the 16S rRNA. In the 70S ribosome it contacts the 23S rRNA (bridge B1a) and protein L5 of the 50S subunit (bridge B1b), connecting the 2 subunits; these bridges are implicated in subunit movement. The chain is Small ribosomal subunit protein uS13 from Saccharolobus solfataricus (strain ATCC 35092 / DSM 1617 / JCM 11322 / P2) (Sulfolobus solfataricus).